Consider the following 509-residue polypeptide: Probable DNA ligase (509 aa).

Residue aspartate 218 coordinates ATP. Lysine 220 functions as the N6-AMP-lysine intermediate in the catalytic mechanism. ATP is bound by residues arginine 225, arginine 240, glutamate 269, phenylalanine 302, arginine 374, and lysine 380.

Belongs to the ATP-dependent DNA ligase family. Requires Mg(2+) as cofactor.

It catalyses the reaction ATP + (deoxyribonucleotide)n-3'-hydroxyl + 5'-phospho-(deoxyribonucleotide)m = (deoxyribonucleotide)n+m + AMP + diphosphate.. Functionally, DNA ligase that seals nicks in double-stranded DNA during DNA replication, DNA recombination and DNA repair. This Nocardioides sp. (strain ATCC BAA-499 / JS614) protein is Probable DNA ligase.